A 292-amino-acid chain; its full sequence is Putative sugar lactone lactonase YvrE (292 aa).

Residues E15, N146, and D196 each contribute to the a divalent metal cation site.

It belongs to the SMP-30/CGR1 family. A divalent metal cation serves as cofactor.

The protein resides in the cytoplasm. In Bacillus subtilis (strain 168), this protein is Putative sugar lactone lactonase YvrE (yvrE).